A 118-amino-acid polypeptide reads, in one-letter code: Large ribosomal subunit protein bL20 (118 aa).

The protein belongs to the bacterial ribosomal protein bL20 family.

Binds directly to 23S ribosomal RNA and is necessary for the in vitro assembly process of the 50S ribosomal subunit. It is not involved in the protein synthesizing functions of that subunit. The protein is Large ribosomal subunit protein bL20 of Aeromonas hydrophila subsp. hydrophila (strain ATCC 7966 / DSM 30187 / BCRC 13018 / CCUG 14551 / JCM 1027 / KCTC 2358 / NCIMB 9240 / NCTC 8049).